Reading from the N-terminus, the 156-residue chain is Arginine repressor (156 aa).

It belongs to the ArgR family.

It is found in the cytoplasm. Its pathway is amino-acid biosynthesis; L-arginine biosynthesis [regulation]. Its function is as follows. Regulates arginine biosynthesis genes. The protein is Arginine repressor of Shewanella piezotolerans (strain WP3 / JCM 13877).